A 349-amino-acid chain; its full sequence is Isopentenyl-diphosphate delta-isomerase (349 aa).

Position 12-13 (12-13) interacts with substrate; the sequence is RK. FMN-binding positions include 69-71, Ser-99, and Asn-128; that span reads GMT. Residue Gln-158 participates in substrate binding. Glu-159 lines the Mg(2+) pocket. FMN-binding positions include Lys-189, Ser-214, Thr-219, 265–267, and 286–287; these read GIR and SG.

This sequence belongs to the IPP isomerase type 2 family. In terms of assembly, homooctamer. Dimer of tetramers. The cofactor is FMN. Requires NADPH as cofactor. It depends on Mg(2+) as a cofactor.

Its subcellular location is the cytoplasm. The catalysed reaction is isopentenyl diphosphate = dimethylallyl diphosphate. In terms of biological role, involved in the biosynthesis of isoprenoids. Catalyzes the 1,3-allylic rearrangement of the homoallylic substrate isopentenyl (IPP) to its allylic isomer, dimethylallyl diphosphate (DMAPP). The polypeptide is Isopentenyl-diphosphate delta-isomerase (Latilactobacillus sakei subsp. sakei (strain 23K) (Lactobacillus sakei subsp. sakei)).